A 101-amino-acid chain; its full sequence is Thyrotropin subunit beta (101 aa).

Disulfide bonds link Cys2-Cys88, Cys10-Cys66, Cys14-Cys68, and Cys71-Cys78. The N-linked (GlcNAc...) asparagine glycan is linked to Asn6.

Belongs to the glycoprotein hormones subunit beta family. In terms of assembly, heterodimer of a common alpha chain and a unique beta chain which confers biological specificity to thyrotropin, lutropin, follitropin and gonadotropin.

It is found in the secreted. Functionally, indispensable for the control of thyroid structure and metabolism. This is Thyrotropin subunit beta (TSHB) from Phodopus sungorus (Striped hairy-footed hamster).